The following is a 320-amino-acid chain: MLIDQFDRKINYLRISVTQRCNFRCLYCMPKIPFDYQPKENLLSFEELFLFVKATIDEGIEKIRITGGEPLLRKDLSIFIKMISDYKSDIDLAITTNGFLLKDFAKDLKNAGLKRLNISLDTLDHKKAKTLAQKDVLDSVLSGIDEALNLDLKVKLNTVALKNLNDDELISLLEFAKSKKAQIRFIEFMENTHAYGKLQGLKRDEIIQILSQKYQIQLIKKDEKAPVSIYKADDYEFGIIDPHSHEFCDSCNRIRLSAEGLLIPCLYFDEASSIKEAVRKGDIKAAVEILQEVLRNKPEKNKWSVVDNETSSRAFYQTGG.

The Radical SAM core domain maps to 5–225; sequence QFDRKINYLR…IQLIKKDEKA (221 aa). Arg14 is a binding site for GTP. The [4Fe-4S] cluster site is built by Cys21 and Cys25. Tyr27 provides a ligand contact to S-adenosyl-L-methionine. Position 28 (Cys28) interacts with [4Fe-4S] cluster. Position 64 (Arg64) interacts with GTP. Gly68 contributes to the S-adenosyl-L-methionine binding site. Thr95 contacts GTP. Position 119 (Ser119) interacts with S-adenosyl-L-methionine. Lys155 is a binding site for GTP. S-adenosyl-L-methionine is bound at residue Met189. [4Fe-4S] cluster is bound by residues Cys248 and Cys251. 253–255 is a GTP binding site; that stretch reads RIR. Residue Cys265 participates in [4Fe-4S] cluster binding.

The protein belongs to the radical SAM superfamily. MoaA family. In terms of assembly, monomer and homodimer. [4Fe-4S] cluster serves as cofactor.

The catalysed reaction is GTP + AH2 + S-adenosyl-L-methionine = (8S)-3',8-cyclo-7,8-dihydroguanosine 5'-triphosphate + 5'-deoxyadenosine + L-methionine + A + H(+). The protein operates within cofactor biosynthesis; molybdopterin biosynthesis. Its function is as follows. Catalyzes the cyclization of GTP to (8S)-3',8-cyclo-7,8-dihydroguanosine 5'-triphosphate. The protein is GTP 3',8-cyclase of Campylobacter jejuni subsp. doylei (strain ATCC BAA-1458 / RM4099 / 269.97).